The primary structure comprises 183 residues: Cuticle protein 2 (183 aa).

The signal sequence occupies residues 1 to 15 (MKLIVVAALIGVCAG). Residues 58 to 121 (SQGFQYVYDT…AQGAHLPTPP (64 aa)) enclose the Chitin-binding type R&amp;R domain.

The chain is Cuticle protein 2 from Lonomia obliqua (Moth).